The chain runs to 85 residues: UPF0291 protein str0508 (85 aa).

Positions 62–85 (TPEKLRQVQREKGLHGRSLDDPES) are disordered.

The protein belongs to the UPF0291 family.

Its subcellular location is the cytoplasm. This chain is UPF0291 protein str0508, found in Streptococcus thermophilus (strain CNRZ 1066).